The following is a 461-amino-acid chain: MSRAHVLLATFPAQGHINPALQFAKRLANADIQVTFFTSVYAWRRMSRTAAGSNGLINFVSFSDGYDDGLQPGDDGKNYMSEMKSRGIKALSDTLAANNVDQKSSKITFVVYSHLFAWAAKVAREFHLRSALLWIEPATVLDIFYFYFNGYSDEIDAGSDAIHLPGGLPVLAQRDLPSFLLPSTHERFRSLMKEKLETLEGEEKPKVLVNSFDALEPDALKAIDKYEMIAIGPLIPSAFLDGKDPSDRSFGGDLFEKGSNDDDCLEWLSTNPRSSVVYVSFGSFVNTTKSQMEEIARGLLDCGRPFLWVVRVNEGEEVLISCMEELKRVGKIVSWCSQLEVLTHPSLGCFVTHCGWNSTLESISFGVPMVAFPQWFDQGTNAKLMEDVWRTGVRVRANEEGSVVDGDEIRRCIEEVMDGGEKSRKLRESAGKWKDLARKAMEEDGSSVNNLKVFLDEVVGI.

Residues 1–15 (MSRAHVLLATFPAQG) form the signal peptide. His16 (proton acceptor) is an active-site residue. Residue His16 coordinates an anthocyanidin. UDP-alpha-D-glucose-binding residues include Gln338, His353, Trp356, Asn357, Ser358, Glu361, Asp377, and Gln378.

This sequence belongs to the UDP-glycosyltransferase family.

It carries out the reaction an anthocyanidin 3-O-beta-D-glucoside + UDP-alpha-D-glucose = an anthocyanidin 3,5-di-O-beta-D-glucoside + UDP + 2 H(+). The protein operates within pigment biosynthesis; anthocyanin biosynthesis. Catalyzes the glucosylation at the O-5 position of anthocyanidin 3-glucosides to form anthocyanidin 3,5-di-O-glucosides using UDP-glucose as sugar donor. Anthocyanidin 3,5-di-O-glucosides are molecules that are responsible for pigmentation. Also acts on anthocyanidin 3-O-(6-O-malonylglucoside). Much less active with hydroxycinnamoylglucose derivatives. No activity in the absence of the 3-O-glucoside group. In Verbena hybrida (Garden vervain), this protein is Anthocyanidin 3-O-glucoside 5-O-glucosyltransferase (HGT8).